Reading from the N-terminus, the 275-residue chain is Hydroxyethylthiazole kinase (275 aa).

Methionine 50 serves as a coordination point for substrate. The ATP site is built by arginine 126 and serine 171. Position 200 (alanine 200) interacts with substrate.

This sequence belongs to the Thz kinase family. Requires Mg(2+) as cofactor.

The enzyme catalyses 5-(2-hydroxyethyl)-4-methylthiazole + ATP = 4-methyl-5-(2-phosphooxyethyl)-thiazole + ADP + H(+). It participates in cofactor biosynthesis; thiamine diphosphate biosynthesis; 4-methyl-5-(2-phosphoethyl)-thiazole from 5-(2-hydroxyethyl)-4-methylthiazole: step 1/1. Catalyzes the phosphorylation of the hydroxyl group of 4-methyl-5-beta-hydroxyethylthiazole (THZ). This Acinetobacter baumannii (strain AB307-0294) protein is Hydroxyethylthiazole kinase.